We begin with the raw amino-acid sequence, 462 residues long: Acetyl-CoA decarbonylase/synthase complex subunit gamma (462 aa).

The 60-residue stretch at 1–60 (MAQLSAMDVYNLLPKANCGACGCKTCMEFATKLVNREAKPEDCPKLDDESLEKLQELLAP) folds into the 4Fe-4S domain. Residues cysteine 18, cysteine 21, cysteine 26, and cysteine 43 each coordinate [4Fe-4S] cluster.

As to quaternary structure, heterodimer of delta and gamma chains. The ACDS complex is made up of alpha, epsilon, beta, gamma and delta chains with a probable stoichiometry of (alpha(2)epsilon(2))(4)-beta(8)-(gamma(1)delta(1))(8). The cofactor is corrinoid. [4Fe-4S] cluster is required as a cofactor.

It catalyses the reaction 5,6,7,8-tetrahydrosarcinapterin + methyl-Co(III)-[corrinoid Fe-S protein] = 5-methyltetrahydrosarcinapterin + Co(I)-[corrinoid Fe-S protein] + H(+). Part of a complex that catalyzes the reversible cleavage of acetyl-CoA, allowing autotrophic growth from CO(2). This chain is Acetyl-CoA decarbonylase/synthase complex subunit gamma, found in Methanopyrus kandleri (strain AV19 / DSM 6324 / JCM 9639 / NBRC 100938).